The following is a 293-amino-acid chain: MAGRYAPSPSGDLHFGNLRTALLAWLFARSEGKKFLMRVEDIDEQRSSKESAESQLADLSALGLDWDGDVLYQSTRYDAYRAALEKLDTYECYCSRRDIQEASRAPHVAPGVYPGTCRGLKEEERVEKRATLAAQNRHPAIRLRAQVTSFDFHDRLRGPQTGPVDDFILLRGGQEPGWAYNLAVVVDDAYQGVDQVVRGDDLLDSAARQAYLGSLLGTPAPEYIHVPLVLNAHGQRLAKRDGAVTLKEMLIDAPLHTIFSRLASSLGYEGVNSAPQLLEIFDPTTLSREPFIY.

Residues 4 to 8 and E40 contribute to the L-glutamate site; that span reads RYAPS. Positions 7-17 match the 'HIGH' region motif; sequence PSPSGDLHFGN. Residues C92, C94, Y113, and C117 each contribute to the Zn(2+) site. Residues Y180 and R198 each contribute to the L-glutamate site. A 'KMSKS' region motif is present at residues 236 to 240; sequence RLAKR. K239 is an ATP binding site.

The protein belongs to the class-I aminoacyl-tRNA synthetase family. GluQ subfamily. Zn(2+) serves as cofactor.

Catalyzes the tRNA-independent activation of glutamate in presence of ATP and the subsequent transfer of glutamate onto a tRNA(Asp). Glutamate is transferred on the 2-amino-5-(4,5-dihydroxy-2-cyclopenten-1-yl) moiety of the queuosine in the wobble position of the QUC anticodon. In Corynebacterium glutamicum (strain ATCC 13032 / DSM 20300 / JCM 1318 / BCRC 11384 / CCUG 27702 / LMG 3730 / NBRC 12168 / NCIMB 10025 / NRRL B-2784 / 534), this protein is Glutamyl-Q tRNA(Asp) synthetase.